The primary structure comprises 335 residues: Glycerol-3-phosphate dehydrogenase [NAD(P)+] (335 aa).

Positions 10, 11, 31, and 105 each coordinate NADPH. Positions 105, 136, and 138 each coordinate sn-glycerol 3-phosphate. An NADPH-binding site is contributed by Ala-140. Residues Lys-191, Asp-244, Ser-254, Arg-255, and Asn-256 each coordinate sn-glycerol 3-phosphate. The active-site Proton acceptor is the Lys-191. An NADPH-binding site is contributed by Arg-255. Val-279 and Glu-281 together coordinate NADPH.

Belongs to the NAD-dependent glycerol-3-phosphate dehydrogenase family.

Its subcellular location is the cytoplasm. It catalyses the reaction sn-glycerol 3-phosphate + NAD(+) = dihydroxyacetone phosphate + NADH + H(+). The catalysed reaction is sn-glycerol 3-phosphate + NADP(+) = dihydroxyacetone phosphate + NADPH + H(+). The protein operates within membrane lipid metabolism; glycerophospholipid metabolism. Catalyzes the reduction of the glycolytic intermediate dihydroxyacetone phosphate (DHAP) to sn-glycerol 3-phosphate (G3P), the key precursor for phospholipid synthesis. The chain is Glycerol-3-phosphate dehydrogenase [NAD(P)+] from Leptospira interrogans serogroup Icterohaemorrhagiae serovar Lai (strain 56601).